Here is a 461-residue protein sequence, read N- to C-terminus: Photosystem II CP43 reaction center protein (461 aa).

Positions 1 to 2 (ME) are excised as a propeptide. Thr3 bears the N-acetylthreonine mark. Thr3 is subject to Phosphothreonine. A run of 5 helical transmembrane segments spans residues 57-81 (LFEV…PHLA), 122-143 (LLGP…KDRN), 166-188 (KALY…RKIT), 243-263 (KPFA…LSYS), and 279-300 (WFNN…ASQA). Glu355 serves as a coordination point for [CaMn4O5] cluster. The helical transmembrane segment at 435–459 (RARAAAAGFEKGIDRDFEPVLSMTP) threads the bilayer.

This sequence belongs to the PsbB/PsbC family. PsbC subfamily. PSII is composed of 1 copy each of membrane proteins PsbA, PsbB, PsbC, PsbD, PsbE, PsbF, PsbH, PsbI, PsbJ, PsbK, PsbL, PsbM, PsbT, PsbX, PsbY, PsbZ, Psb30/Ycf12, at least 3 peripheral proteins of the oxygen-evolving complex and a large number of cofactors. It forms dimeric complexes. Binds multiple chlorophylls and provides some of the ligands for the Ca-4Mn-5O cluster of the oxygen-evolving complex. It may also provide a ligand for a Cl- that is required for oxygen evolution. PSII binds additional chlorophylls, carotenoids and specific lipids. is required as a cofactor.

It localises to the plastid. The protein resides in the chloroplast thylakoid membrane. In terms of biological role, one of the components of the core complex of photosystem II (PSII). It binds chlorophyll and helps catalyze the primary light-induced photochemical processes of PSII. PSII is a light-driven water:plastoquinone oxidoreductase, using light energy to abstract electrons from H(2)O, generating O(2) and a proton gradient subsequently used for ATP formation. The chain is Photosystem II CP43 reaction center protein from Platanus occidentalis (Sycamore).